The sequence spans 600 residues: MKNQKYIRNFSIIAHIDHGKSTLADRLIEHCGGLQAREMRTQVLDSMDIEKERGITIKAQTVRLVYKAKDGNTYYLNLMDTPGHVDFAYEVSRSLAACEGSLLVVDSTQGVEAQTLANVYQAIEHDHEIVPVLNKIDLPASEPEQVKQQIEDIIGIDASEAVLISAKSGIGIDLVLEAIVNKLHPPKESSTDILKALLVDSWYDPYLGVVILVRIIDGTLRKNMRIKMMATNSVYTVENVGFFTPKKHISDVLYAGEIGFVTASIKQVADCKVGDTITDEKKPCEQALPGFKPNLPVVFCGLYPTDSSEFEHLKDSLAKLRLNDASFEYEMESSSALGVGFRCGFLGLLHLEIIQERLSREFDLDLITTAPSVVYKIHMRYGESLEIHNPADLPDLQKIESMEEPWIKATIMVPDEFLGAVLSLCTEKRGVQLDHSYIANRAKIVYKLPLNEIVYDFYDRLKSCSKGYASFEWQIDVYEPSELVKLGILVNGEVIDALSTIVHRSRAEQRGKVLCVRLKDLIPRQQIDIAIQASIGSRIIARETIKALRKDVLSKCYGGDISRKRKLLEKQKAGKKRMRQYGNIEIPQSAFIAALKIGDE.

Residues 5–187 form the tr-type G domain; sequence KYIRNFSIIA…AIVNKLHPPK (183 aa). Residues 17–22 and 134–137 each bind GTP; these read DHGKST and NKID.

It belongs to the TRAFAC class translation factor GTPase superfamily. Classic translation factor GTPase family. LepA subfamily.

The protein resides in the cell inner membrane. The enzyme catalyses GTP + H2O = GDP + phosphate + H(+). Its function is as follows. Required for accurate and efficient protein synthesis under certain stress conditions. May act as a fidelity factor of the translation reaction, by catalyzing a one-codon backward translocation of tRNAs on improperly translocated ribosomes. Back-translocation proceeds from a post-translocation (POST) complex to a pre-translocation (PRE) complex, thus giving elongation factor G a second chance to translocate the tRNAs correctly. Binds to ribosomes in a GTP-dependent manner. This Rickettsia akari (strain Hartford) protein is Elongation factor 4.